The chain runs to 152 residues: Large-conductance mechanosensitive channel (152 aa).

The next 2 helical transmembrane spans lie at 14-34 and 81-101; these read VIDL…VTSL and GLFL…FIVI.

Belongs to the MscL family. In terms of assembly, homopentamer.

It localises to the cell membrane. Channel that opens in response to stretch forces in the membrane lipid bilayer. May participate in the regulation of osmotic pressure changes within the cell. The chain is Large-conductance mechanosensitive channel from Clostridium perfringens (strain ATCC 13124 / DSM 756 / JCM 1290 / NCIMB 6125 / NCTC 8237 / Type A).